Here is an 873-residue protein sequence, read N- to C-terminus: MGSLSRSEEMRFCQLIVEKDAAFNIVAEIGKQPYVQFKDLNPNVNSFQRTFVKDIRRYDEMERKLRFLESQIVKDEIVIPGRVDTGDYTILPTSELNTLEGTLTELEKDVKSMNDSDSQLKANFMDLKEWDAVLDKTDEFFQGGVDDQAQEELENLDEEGAVPRVEKGPVNYLVGIIRRERLNGFERVLWRACHHTAYIRSSDIEEELEDPGTGEKVHKSVFIIFLKGDRMRSIVEKVCDGFKAKLFKNCPKTFKERQSARNDVRARIQDLQTVLGQTREHRFRVLQAAANNHHQWLKQVRMIKTVFHMLNLFTFDGIGRFFVGECWIPLKHVEDVRKAIEVGAERSGSSVKPVLNILETSVTPPTYNETNKFTAVFQGIVDSYGIATYRELNPAPYTIITFPFLFSCMFGDLGHGCIMLMAGLWFVLREKNLQARNIKDEIFNMFFGGRYIILLMGLFSIHAGIIYNDMFAKSFNIFGSGWKNPYNASEIEGWINRTEHGKEMLVELAPEDAYDHAGGPYSFGVDPIWNIAENKLNFLNSMKMKLSVILGISQMTFGVILSFFNHTYNKSKIDIFTVFIPQMLFMGCIFMYLCLQIILKWLFFWTKEATVFGQIYPGSHCAPSLLIGLINMFMMKDRNAGFVVDGGKVNGEYREVETCYLSQWYPGQSVIEMILVVIAVICVPVMLFGKPIHHVMQQKKKAKELHGNATVRANVVSDSSEIVLNGGSKKEGAAHEEHGHGGHEDESFGDIMVHQAIHTIEYVLGCVSHTASYLRLWALSLAHAQLSEVLWHMVFVTGGLGISGTAGFIAVYVVFFIFFVLTISILVLMEGLSAFLHTLRLHWVEFQSKFYLGLGYPFVPYSFKTALQEAEAA.

Residues 1 to 407 (MGSLSRSEEM…TIITFPFLFS (407 aa)) lie on the Cytoplasmic side of the membrane. The helical transmembrane segment at 408 to 428 (CMFGDLGHGCIMLMAGLWFVL) threads the bilayer. Residues 429–445 (REKNLQARNIKDEIFNM) lie on the Lumenal side of the membrane. A helical transmembrane segment spans residues 446–466 (FFGGRYIILLMGLFSIHAGII). Residues 467-543 (YNDMFAKSFN…NKLNFLNSMK (77 aa)) are Cytoplasmic-facing. Residues 544 to 564 (MKLSVILGISQMTFGVILSFF) traverse the membrane as a helical segment. Residues asparagine 565 and asparagine 569 are each glycosylated (N-linked (GlcNAc...) asparagine). Over 565 to 574 (NHTYNKSKID) the chain is Lumenal. The helical transmembrane segment at 575-595 (IFTVFIPQMLFMGCIFMYLCL) threads the bilayer. At 596–614 (QIILKWLFFWTKEATVFGQ) the chain is on the cytoplasmic side. The chain crosses the membrane as a helical span at residues 615 to 635 (IYPGSHCAPSLLIGLINMFMM). Topologically, residues 636-668 (KDRNAGFVVDGGKVNGEYREVETCYLSQWYPGQ) are lumenal. The chain crosses the membrane as a helical span at residues 669–689 (SVIEMILVVIAVICVPVMLFG). The Cytoplasmic segment spans residues 690-785 (KPIHHVMQQK…LWALSLAHAQ (96 aa)). Residues 786 to 806 (LSEVLWHMVFVTGGLGISGTA) form a helical membrane-spanning segment. A topological domain (lumenal) is located at residue glycine 807. A helical transmembrane segment spans residues 808 to 828 (FIAVYVVFFIFFVLTISILVL). Over 829-873 (MEGLSAFLHTLRLHWVEFQSKFYLGLGYPFVPYSFKTALQEAEAA) the chain is Cytoplasmic.

This sequence belongs to the V-ATPase 116 kDa subunit family. As to quaternary structure, V-ATPase is a heteromultimeric enzyme made up of two complexes: the ATP-hydrolytic V1 complex and the proton translocation V0 complex. The V1 complex consists of three catalytic AB heterodimers that form a heterohexamer, three peripheral stalks each consisting of EG heterodimers, one central rotor including subunits D and F, and the regulatory subunits C and H. The proton translocation complex V0 consists of the proton transport subunit a, a ring of proteolipid subunits c9c'', rotary subunit d, subunits e and f, and the accessory subunits vah-19/Ac45 and vah-20/PRR. Interacts with V-type proton ATPase subunit C vha-11. Expressed in the H-shaped excretory cell (at protein level). Expressed in hypodermal cells around the vulva. Expressed in the main epidermal syncytium. Expressed in the sheath cells associated with head and tail sensory organs; specifically, expressed in the apical sheath cells of the amphids and CEP neuron and in the sheath cells of the OLQ sensory organ.

It is found in the apical cell membrane. It localises to the endosome. The protein localises to the multivesicular body membrane. Its function is as follows. Subunit of the V0 complex of vacuolar(H+)-ATPase (V-ATPase), a multisubunit enzyme composed of a peripheral complex (V1) that hydrolyzes ATP and a membrane integral complex (V0) that translocates protons. V-ATPase is responsible for acidifying and maintaining the pH of intracellular compartments and in some cell types, is targeted to the plasma membrane, where it is responsible for acidifying the extracellular environment. Involved in the assembly of the V-ATPase complex. The V-ATPase is required for the function of the excretory canal. Independently of the V1 complex, the V0 complex of the V-ATPase is required for multivesicular body membrane fusion with the apical membrane of the epidermal cells during exosome release and thus regulates the release of cuticle components such as Hedgehog-related peptide wrt-2 but not collagen. Also, in the epidermis, regulates the trafficking of che-14 and rdy-2. Regulates the secretion of granular material found in the amphid channel and in controlling osmoregulation in the amphid pocket. The sequence is that of V-type proton ATPase 116 kDa subunit a 2 from Caenorhabditis elegans.